A 336-amino-acid polypeptide reads, in one-letter code: NmrA-like family domain-containing oxidoreductase malD (336 aa).

NADP(+)-binding positions include 12–17, 40–44, 61–62, 82–84, K140, and 163–166; these read GGTGNQ, RDPTS, DG, TNS, and FMEA.

The protein belongs to the NmrA-type oxidoreductase family.

In terms of biological role, nmrA-like family domain-containing oxidoreductase; part of the gene cluster that mediates the biosynthesis of malbrancheamide, a dichlorinated fungal indole alkaloid that belongs to a family of natural products containing a characteristic bicyclo[2.2.2]diazaoctane core. The first step of malbrancheamide biosynthesis involves coupling of L-proline and L-tryptophan by malG, a bimodular NRPS, to produce L-Pro-L-Trp aldehyde through reductive offloading. This compound undergoes spontaneous cyclization and dehydration to give a dienamine which is reverse prenylated at C-2 by malE. The other prenyltransferase present in the cluster, malB, displays modest activity, suggesting that may be a redundant gene in the pathway. Subsequently, a [4+2] Diels-Alder cyclo-addition catalyzed by the bifunctional enzyme malC forms the characteristic bicyclo[2.2.2]diazaoctane ring of premalbrancheamid. Finally, the flavin-dependent halogenase malA catalyzes the iterative dichlorination of the indole ring of premalbrancheamide to yield C-9 monochlorinated malbrancheamide B, C-8 monochlorinated isomalbrancheamide B, and dichlorinated malbrancheamide. MalA is also able to brominate premalbrancheamide at C-9 to yield malbrancheamide C, and, to a lesser extend, at C-8 to yield isomalbrancheamide C. Finally, malA can brominate C-9 monochlorinated malbrancheamide B at C-8 to yield malbrancheamide D, or C-8 monochlorinated isomalbrancheamide B at C-9 to produce isomalbrancheamide D. The chain is NmrA-like family domain-containing oxidoreductase malD from Malbranchea aurantiaca.